We begin with the raw amino-acid sequence, 814 residues long: Valine--tRNA ligase (814 aa).

Positions 46-56 (PTVSGQLHIGH) match the 'HIGH' region motif. Positions 536-540 (KMSKS) match the 'KMSKS' region motif. ATP is bound at residue Lys539.

Belongs to the class-I aminoacyl-tRNA synthetase family. ValS type 2 subfamily. As to quaternary structure, monomer.

The protein localises to the cytoplasm. It carries out the reaction tRNA(Val) + L-valine + ATP = L-valyl-tRNA(Val) + AMP + diphosphate. Catalyzes the attachment of valine to tRNA(Val). As ValRS can inadvertently accommodate and process structurally similar amino acids such as threonine, to avoid such errors, it has a 'posttransfer' editing activity that hydrolyzes mischarged Thr-tRNA(Val) in a tRNA-dependent manner. This Rickettsia typhi (strain ATCC VR-144 / Wilmington) protein is Valine--tRNA ligase.